Here is a 236-residue protein sequence, read N- to C-terminus: MQTHNNVDPQEIAKFEKMAATWWDPEGEFKPLHNLNPLRLNYIDQIAGGIFGKQVLDVGCGGGILSESMAKIGAQVTGLDMGDEPLDVARLHAIETGVLINYVKNTAEAHRDEHRGQYDVVTCMEMLEHVPNPSSVIQACADMVKPGGFVFFSTINRNIRAYVETILGAEYLLKMLPVGTHDHNKFIKPSELIDLADKAELFCSDAVGITYNPITDIFRYTKSLEVNYMIATVKND.

Residues Arg-39, Gly-59, Asp-80, and Met-124 each contribute to the S-adenosyl-L-methionine site.

Belongs to the methyltransferase superfamily. UbiG/COQ3 family.

The catalysed reaction is a 3-demethylubiquinol + S-adenosyl-L-methionine = a ubiquinol + S-adenosyl-L-homocysteine + H(+). It catalyses the reaction a 3-(all-trans-polyprenyl)benzene-1,2-diol + S-adenosyl-L-methionine = a 2-methoxy-6-(all-trans-polyprenyl)phenol + S-adenosyl-L-homocysteine + H(+). It functions in the pathway cofactor biosynthesis; ubiquinone biosynthesis. O-methyltransferase that catalyzes the 2 O-methylation steps in the ubiquinone biosynthetic pathway. The sequence is that of Ubiquinone biosynthesis O-methyltransferase from Shewanella halifaxensis (strain HAW-EB4).